The chain runs to 578 residues: Signal peptide peptidase-like 2B (578 aa).

Positions 1 to 19 (MAAARLAAALLLLAAQVAC) are cleaved as a signal peptide. Residues 20 to 168 (EFGVLRVVSQ…APSEPVMDYN (149 aa)) lie on the Lumenal side of the membrane. In terms of domain architecture, PA spans 61-145 (LRDLSTTQLC…LLSHRDLQDI (85 aa)). N-linked (GlcNAc...) asparagine glycosylation is found at Asn91 and Asn123. The helical transmembrane segment at 169–189 (MVIIFVMAVGTVAIGGYWAGS) threads the bilayer. Topologically, residues 190–216 (HDVKKYMKHKRDDGPEKQEDEAVDVTP) are cytoplasmic. Residues 217-237 (VMICVFVVMCCFMLVLLYYFY) form a helical membrane-spanning segment. Residues 238–239 (DR) lie on the Lumenal side of the membrane. Residues 240 to 260 (LVYVIIGIFCLASSTGLYSCL) form a helical membrane-spanning segment. At 261–286 (APFVRKLPFCTCRVPDNNLPYFHKRP) the chain is on the cytoplasmic side. Residues 287–307 (QARMLLLALFCVTVSVVWGIF) form a helical membrane-spanning segment. Residues 308–312 (RNEDQ) lie on the Lumenal side of the membrane. A helical membrane pass occupies residues 313–333 (WAWVLQDTLGIAFCLYMLKTI). The Cytoplasmic portion of the chain corresponds to 334–341 (RLPTFKAC). A helical transmembrane segment spans residues 342 to 362 (TLLLLVLFIYDIFFVFITPFL). Asp352 is an active-site residue. Residues 363–405 (TKSGNSIMVEVATGPSNSSTHEKLPMVLKVPRLNTSPLSLCDR) are Lumenal-facing. A helical transmembrane segment spans residues 406–426 (PFSLLGFGDILVPGLLVAYCH). Asp414 is an active-site residue. The Cytoplasmic portion of the chain corresponds to 427 to 438 (RFDIQVQSSRIY). Residues 439–459 (FVACTIAYGLGLLVTFVALVL) form a helical membrane-spanning segment. At 460–463 (MQRG) the chain is on the lumenal side. A helical transmembrane segment spans residues 464–484 (QPALLYLVPCTLLTSCTVALW). The PAL signature appears at 465-467 (PAL). At 485-578 (RRELGAFWTG…IPVVKPETSA (94 aa)) the chain is on the cytoplasmic side. Positions 502–578 (PQTPWAATQG…IPVVKPETSA (77 aa)) are disordered. Low complexity predominate over residues 520-529 (SSLSEQPPSE).

Belongs to the peptidase A22B family. In terms of assembly, monomer. Homodimer. Interacts with ITM2B and TNF. In terms of processing, glycosylated.

The protein resides in the cell membrane. The protein localises to the golgi apparatus membrane. It localises to the lysosome membrane. It is found in the endosome membrane. Its subcellular location is the membrane. Its function is as follows. Intramembrane-cleaving aspartic protease (I-CLiP) that cleaves type II membrane signal peptides in the hydrophobic plane of the membrane. Functions in ITM2B and TNF processing. Catalyzes the intramembrane cleavage of the anchored fragment of shed TNF-alpha (TNF), which promotes the release of the intracellular domain (ICD) for signaling to the nucleus. May play a role in the regulation of innate and adaptive immunity. This is Signal peptide peptidase-like 2B from Mus musculus (Mouse).